The following is a 347-amino-acid chain: Lipoyl synthase (347 aa).

[4Fe-4S] cluster is bound by residues C55, C60, C66, C81, C85, C88, and S292. In terms of domain architecture, Radical SAM core spans 67-281 (WEDREASFLI…SEAAYDMGFP (215 aa)).

This sequence belongs to the radical SAM superfamily. Lipoyl synthase family. [4Fe-4S] cluster serves as cofactor.

It localises to the cytoplasm. It catalyses the reaction [[Fe-S] cluster scaffold protein carrying a second [4Fe-4S](2+) cluster] + N(6)-octanoyl-L-lysyl-[protein] + 2 oxidized [2Fe-2S]-[ferredoxin] + 2 S-adenosyl-L-methionine + 4 H(+) = [[Fe-S] cluster scaffold protein] + N(6)-[(R)-dihydrolipoyl]-L-lysyl-[protein] + 4 Fe(3+) + 2 hydrogen sulfide + 2 5'-deoxyadenosine + 2 L-methionine + 2 reduced [2Fe-2S]-[ferredoxin]. It participates in protein modification; protein lipoylation via endogenous pathway; protein N(6)-(lipoyl)lysine from octanoyl-[acyl-carrier-protein]: step 2/2. In terms of biological role, catalyzes the radical-mediated insertion of two sulfur atoms into the C-6 and C-8 positions of the octanoyl moiety bound to the lipoyl domains of lipoate-dependent enzymes, thereby converting the octanoylated domains into lipoylated derivatives. The protein is Lipoyl synthase of Corynebacterium urealyticum (strain ATCC 43042 / DSM 7109).